The sequence spans 97 residues: Secreted Ly-6/uPAR domain-containing protein 2 (97 aa).

An N-terminal signal peptide occupies residues 1–22 (MQFHTGLLLAAVLSLQLAAAQA). One can recognise a UPAR/Ly6 domain in the interval 23-95 (LWCHQCTGFG…IACCQTSLCN (73 aa)). 5 disulfides stabilise this stretch: C25–C47, C28–C34, C40–C68, C72–C88, and C89–C94.

As to quaternary structure, interacts with CHRNA3, CHRNA4, CHRNA5, CHRNA7, CHRNB2 and CHRNB4. Interacts with CHRM1 and CHRM3 probably in an allosteric manner.

It is found in the secreted. In terms of biological role, binds and may modulate the functional properties of nicotinic and muscarinic acetylcholine receptors. May regulate keratinocytes proliferation, differentiation and apoptosis. In vitro moderately inhibits ACh-evoked currents of alpha-3:beta-2-containing nAChRs, strongly these of alpha-4:beta-2-containing nAChRs, modulates alpha-7-containing nAChRs, and inhibits nicotine-induced signaling probably implicating alpha-3:beta-4-containing nAChRs. Proposed to act on alpha-3:beta-2 and alpha-7 nAChRs in an orthosteric, and on mAChRs, such as CHRM1 and CHRM3, in an allosteric manner. This Macaca mulatta (Rhesus macaque) protein is Secreted Ly-6/uPAR domain-containing protein 2.